The following is a 103-amino-acid chain: MAAVSLSVSTVKPLGDRVFVKVSESEEKTAGGILLPDTAKEKPQVGEVAQVGPGKRNEDGSRQAPEVGVGDKVLYSKYAGTDIKLGSDEYVLLSEKDILAVVN.

It belongs to the GroES chaperonin family. In terms of assembly, heptamer of 7 subunits arranged in a ring. Interacts with the chaperonin GroEL.

Its subcellular location is the cytoplasm. Functionally, together with the chaperonin GroEL, plays an essential role in assisting protein folding. The GroEL-GroES system forms a nano-cage that allows encapsulation of the non-native substrate proteins and provides a physical environment optimized to promote and accelerate protein folding. GroES binds to the apical surface of the GroEL ring, thereby capping the opening of the GroEL channel. In Prochlorococcus marinus (strain MIT 9211), this protein is Co-chaperonin GroES.